Reading from the N-terminus, the 554-residue chain is Glucose-6-phosphate isomerase (554 aa).

Residue glutamate 359 is the Proton donor of the active site. Active-site residues include histidine 390 and lysine 518.

It belongs to the GPI family.

The protein localises to the cytoplasm. The catalysed reaction is alpha-D-glucose 6-phosphate = beta-D-fructose 6-phosphate. It participates in carbohydrate biosynthesis; gluconeogenesis. Its pathway is carbohydrate degradation; glycolysis; D-glyceraldehyde 3-phosphate and glycerone phosphate from D-glucose: step 2/4. Catalyzes the reversible isomerization of glucose-6-phosphate to fructose-6-phosphate. The sequence is that of Glucose-6-phosphate isomerase from Pseudomonas aeruginosa (strain LESB58).